Here is a 99-residue protein sequence, read N- to C-terminus: Sperm protein associated with the nucleus on the X chromosome N4 (99 aa).

The span at 1-10 (MEEPTSSTNE) shows a compositional bias: polar residues. The segment at 1-99 (MEEPTSSTNE…AGSPQDGGQN (99 aa)) is disordered. Basic and acidic residues predominate over residues 11–22 (NKMKSPCESNKR). Residues 23–32 (KVDKKKKNLH) are compositionally biased toward basic residues. Polar residues predominate over residues 64–78 (SNQLENNQPTESSTD).

It belongs to the SPAN-X family.

The chain is Sperm protein associated with the nucleus on the X chromosome N4 (SPANXN4) from Homo sapiens (Human).